The chain runs to 195 residues: Probable nicotinate-nucleotide adenylyltransferase (195 aa).

It belongs to the NadD family.

The enzyme catalyses nicotinate beta-D-ribonucleotide + ATP + H(+) = deamido-NAD(+) + diphosphate. It functions in the pathway cofactor biosynthesis; NAD(+) biosynthesis; deamido-NAD(+) from nicotinate D-ribonucleotide: step 1/1. Catalyzes the reversible adenylation of nicotinate mononucleotide (NaMN) to nicotinic acid adenine dinucleotide (NaAD). This is Probable nicotinate-nucleotide adenylyltransferase from Chlorobaculum tepidum (strain ATCC 49652 / DSM 12025 / NBRC 103806 / TLS) (Chlorobium tepidum).